Consider the following 74-residue polypeptide: UPF0346 protein SE_1114 (74 aa).

It belongs to the UPF0346 family.

The chain is UPF0346 protein SE_1114 from Staphylococcus epidermidis (strain ATCC 12228 / FDA PCI 1200).